A 180-amino-acid chain; its full sequence is Adenine phosphoribosyltransferase (180 aa).

N-acetylalanine is present on A2. 2 positions are modified to phosphoserine: S15 and S30. Y60 carries the post-translational modification Phosphotyrosine. S66 bears the Phosphoserine mark. T135 carries the post-translational modification Phosphothreonine.

The protein belongs to the purine/pyrimidine phosphoribosyltransferase family. As to quaternary structure, homodimer.

The protein resides in the cytoplasm. The catalysed reaction is AMP + diphosphate = 5-phospho-alpha-D-ribose 1-diphosphate + adenine. It functions in the pathway purine metabolism; AMP biosynthesis via salvage pathway; AMP from adenine: step 1/1. Functionally, catalyzes a salvage reaction resulting in the formation of AMP, that is energically less costly than de novo synthesis. The sequence is that of Adenine phosphoribosyltransferase from Bos taurus (Bovine).